A 268-amino-acid polypeptide reads, in one-letter code: Phosphatidylglycerol--prolipoprotein diacylglyceryl transferase (268 aa).

The next 7 helical transmembrane spans lie at 10–30, 56–76, 92–112, 120–140, 174–194, 202–222, and 236–256; these read VALAIGPLKIHWYGLMYLIGI, LVFWLSMGVIVGGRLGYVLFY, WKGGMSFHGGFIGVMLAALWF, FFELMDFVAPLVPIGLGAGRI, PSQLYQFALEGVALFVILWLF, MAVSGMFSLCYGIFRFAVEFV, and WLTQGQLLCIPMIVGGLVLIW. Arg139 is a binding site for a 1,2-diacyl-sn-glycero-3-phospho-(1'-sn-glycerol).

It belongs to the Lgt family.

The protein resides in the cell inner membrane. The catalysed reaction is L-cysteinyl-[prolipoprotein] + a 1,2-diacyl-sn-glycero-3-phospho-(1'-sn-glycerol) = an S-1,2-diacyl-sn-glyceryl-L-cysteinyl-[prolipoprotein] + sn-glycerol 1-phosphate + H(+). The protein operates within protein modification; lipoprotein biosynthesis (diacylglyceryl transfer). In terms of biological role, catalyzes the transfer of the diacylglyceryl group from phosphatidylglycerol to the sulfhydryl group of the N-terminal cysteine of a prolipoprotein, the first step in the formation of mature lipoproteins. This chain is Phosphatidylglycerol--prolipoprotein diacylglyceryl transferase, found in Pseudomonas putida (strain ATCC 47054 / DSM 6125 / CFBP 8728 / NCIMB 11950 / KT2440).